Consider the following 269-residue polypeptide: MNGSMRHIYLFSDATGETVERVLRAALSQFRDVEARIHRMSKIRTREDILSALEDVLKEPGIVIYTLVDAELAQLLRDEAEAHGLDALDLISSLLFKLSDFFGVAPQNEPGLLYELNTEYHKRIEAVDFTVKHDDGQDPRGLSKADFVLVGVSRSSKTPLSMYLAHKGYKVANVPLVKGIDPPAELFKVDQNKIVGLLIDPHRLLEIRSVRLKNLGQMSRGSYADYEKIEDELNYCRQLYRRNPQWLVIDVTKRSVEESAAEIIQKLCS.

151 to 158 (GVSRSSKT) provides a ligand contact to ADP.

Belongs to the pyruvate, phosphate/water dikinase regulatory protein family. PDRP subfamily.

It catalyses the reaction N(tele)-phospho-L-histidyl/L-threonyl-[pyruvate, phosphate dikinase] + ADP = N(tele)-phospho-L-histidyl/O-phospho-L-threonyl-[pyruvate, phosphate dikinase] + AMP + H(+). The enzyme catalyses N(tele)-phospho-L-histidyl/O-phospho-L-threonyl-[pyruvate, phosphate dikinase] + phosphate + H(+) = N(tele)-phospho-L-histidyl/L-threonyl-[pyruvate, phosphate dikinase] + diphosphate. Functionally, bifunctional serine/threonine kinase and phosphorylase involved in the regulation of the pyruvate, phosphate dikinase (PPDK) by catalyzing its phosphorylation/dephosphorylation. This Geobacter metallireducens (strain ATCC 53774 / DSM 7210 / GS-15) protein is Putative pyruvate, phosphate dikinase regulatory protein.